The sequence spans 1762 residues: Lysine-specific demethylase 3B (1762 aa).

Position 2 is an N-acetylalanine (Ala2). 2 disordered regions span residues 253-350 (MDSS…FVPQ) and 426-468 (TTAS…NSSL). The span at 299–310 (ATKKLKGDRGEV) shows a compositional bias: basic and acidic residues. Low complexity predominate over residues 426-435 (TTASSTPTTV). Polar residues predominate over residues 453–465 (GSWSQASGENSRN). Phosphoserine occurs at positions 493, 547, 557, and 561. Positions 574 to 613 (SVLGADTQPGPKAGSSVDRKVPAESMPTLTPAFPRSLLNT) are disordered. Residue Thr615 is modified to Phosphothreonine. A compositionally biased stretch (polar residues) spans 713-746 (TGSPSLSAVGNGRSSSPTNSLTQPIEMPTLSSSP). Positions 713–763 (TGSPSLSAVGNGRSSSPTNSLTQPIEMPTLSSSPTEERPTVGPGQQDNPLL) are disordered. 3 positions are modified to phosphoserine: Ser767, Ser774, and Ser779. Lys789 participates in a covalent cross-link: Glycyl lysine isopeptide (Lys-Gly) (interchain with G-Cter in SUMO2). Residue Ser799 is modified to Phosphoserine. A disordered region spans residues 806–853 (ACRQDSDSSTNSDLSDLSDSEEQLQAKSGLKGIPEHLMGKLGPNGERS). The C6-type zinc-finger motif lies at 1032–1057 (CDVCETTLFNIHWVCRKCGFGVCLDC). The span at 1146 to 1163 (QLPSVTPSASSGNETTFS) shows a compositional bias: polar residues. The interval 1146–1217 (QLPSVTPSAS…AIRPPCPDTA (72 aa)) is disordered. Residues Ser1254 and Ser1260 each carry the phosphoserine modification. The tract at residues 1285 to 1306 (SNSKTEGSSLRDLLHSGPGKLP) is disordered. Positions 1294–1298 (LRDLL) match the LXXLL motif motif. In terms of domain architecture, JmjC spans 1499-1722 (MPTRFEDLME…HCFRLTQEFR (224 aa)). Fe cation-binding residues include His1561, Asp1563, and His1690.

It belongs to the JHDM2 histone demethylase family. Fe(2+) is required as a cofactor.

The protein localises to the nucleus. The catalysed reaction is N(6),N(6)-dimethyl-L-lysyl(9)-[histone H3] + 2 2-oxoglutarate + 2 O2 = L-lysyl(9)-[histone H3] + 2 formaldehyde + 2 succinate + 2 CO2. Its function is as follows. Histone demethylase that specifically demethylates 'Lys-9' of histone H3, thereby playing a central role in histone code. Demethylation of Lys residue generates formaldehyde and succinate May have tumor suppressor activity. The sequence is that of Lysine-specific demethylase 3B (Kdm3b) from Mus musculus (Mouse).